The primary structure comprises 173 residues: Photosystem I assembly protein Ycf3 (173 aa).

TPR repeat units lie at residues 35 to 68 (AFSYYRDGMSAQAEGEYAEALQNYYEAMRLEIDP), 72 to 105 (SYILYNIGLIHTSNGEHGKALEYYYQAIERNPSL), and 120 to 153 (GEQAIEEGNIATSEILFNQAASYWKQAIRLAPNS).

It belongs to the Ycf3 family.

The protein localises to the plastid. The protein resides in the chloroplast thylakoid membrane. Its function is as follows. Essential for the assembly of the photosystem I (PSI) complex. May act as a chaperone-like factor to guide the assembly of the PSI subunits. In Mesostigma viride (Green alga), this protein is Photosystem I assembly protein Ycf3.